The primary structure comprises 542 residues: MAIPGRQYGLILPKKTQPLHRVLQKPSVFGSDSDDDETSVSESLQREAAKKQAMKQTKLEIQKALAEDSTVYEYDSVYDEMQKKKEENNPKLLPGKDRKPKYIHNLLKAVEIRKKEQEKRMEKKIQREREMENGEFDDKEAFVTSAYKKKLEERAEEEEREKRAAALEAHLDVTKQKDLSGFYRHLLNQAVGEEAAPKSSFREARTVIKEEKLRGYPDETNSESRPPQQSCVLQRGAQEAEENPDADREFDDESSEDGEKRDHKVKSRGEDTGASMKHPKHHKNRAHSRSSSEERGLGTKHHSRGSQSRGHEHQDRQSRDQESCHKDRSHREEKSSHRHREASHKDHYWKKHEQEDKLKGREQEERQDREGKREKYSSREQERDRQRNDHDRYSEKEKKRKEKEEHTKARRERCEDSGKHREREKPEGHGQSSERHRDRRESSPRSRPKDDLDQERSSKARNTEKDKGEQGKPSHSETSLATKHRLAEERPEKGSEQERPPEAVSKFAKRSNEETVMSARDRYLARQMARINAKTYIEKEDD.

A disordered region spans residues 21-53 (RVLQKPSVFGSDSDDDETSVSESLQREAAKKQA). Phosphoserine is present on residues serine 27, serine 31, and serine 33. Residues 103–172 (IHNLLKAVEI…RAAALEAHLD (70 aa)) are a coiled coil. A necessary for alternative splicing activity region spans residues 105–169 (NLLKAVEIRK…REKRAAALEA (65 aa)). The segment at 190 to 516 (AVGEEAAPKS…FAKRSNEETV (327 aa)) is disordered. Residues lysine 198 and lysine 209 each participate in a glycyl lysine isopeptide (Lys-Gly) (interchain with G-Cter in SUMO2) cross-link. Positions 200–217 (SFREARTVIKEEKLRGYP) are enriched in basic and acidic residues. Over residues 223–232 (ESRPPQQSCV) the composition is skewed to polar residues. Positions 239-256 (EAEENPDADREFDDESSE) are enriched in acidic residues. A phosphoserine mark is found at serine 254 and serine 255. Residues 257-271 (DGEKRDHKVKSRGED) are compositionally biased toward basic and acidic residues. Lysine 277 is subject to N6-acetyllysine. The segment covering 277-288 (KHPKHHKNRAHS) has biased composition (basic residues). A Glycyl lysine isopeptide (Lys-Gly) (interchain with G-Cter in SUMO2) cross-link involves residue lysine 280. 3 stretches are compositionally biased toward basic and acidic residues: residues 309–335 (RGHEHQDRQSRDQESCHKDRSHREEKS), 343–475 (SHKD…KPSH), and 485–501 (RLAEERPEKGSEQERPP). Positions 372–413 (KREKYSSREQERDRQRNDHDRYSEKEKKRKEKEEHTKARRER) form a coiled coil. Serine 443 carries the post-translational modification Phosphoserine.

It belongs to the NSRP1 family. In terms of assembly, interacts (via C-terminus) with SRSF1. Interacts (via C-terminus) with SRSF2.

The protein localises to the nucleus. It localises to the nucleus speckle. Its function is as follows. RNA-binding protein that mediates pre-mRNA alternative splicing regulation. The chain is Nuclear speckle splicing regulatory protein 1 (Nsrp1) from Mus musculus (Mouse).